The following is a 205-amino-acid chain: SREBP regulating gene protein (205 aa).

Over M1–R16 the chain is Cytoplasmic. The chain crosses the membrane as a helical span at residues W17–F35. Residues K36–A205 lie on the Lumenal side of the membrane. Residue N67 is glycosylated (N-linked (GlcNAc...) asparagine).

It belongs to the SPRING family. Interacts with SCAP. As to expression, ubiquitously expressed with a slightly higher expression in the liver and kidney.

It localises to the golgi apparatus membrane. Its function is as follows. Positively regulates hepatic SREBP signaling pathway by modulating the proper localization of SCAP (SREBP cleavage-activating protein) to the endoplasmic reticulum, thereby controlling the level of functional SCAP. Plays a crucial role during embryogenesis. This Mus musculus (Mouse) protein is SREBP regulating gene protein (Spring1).